A 108-amino-acid polypeptide reads, in one-letter code: MMKGQLAGLMKQAQQMQENMKKMQEQLAQIEVEGQSGAGLVKVVMTCKNDVKRVTIDPSLLADDKDLLEDLVAAAFNDAVRKAEATTQEKMGSMTSGLPLPPGFKLPF.

Over residues 86–96 (TTQEKMGSMTS) the composition is skewed to polar residues. The tract at residues 86 to 108 (TTQEKMGSMTSGLPLPPGFKLPF) is disordered. Pro residues predominate over residues 99–108 (PLPPGFKLPF).

The protein belongs to the YbaB/EbfC family. In terms of assembly, homodimer.

The protein localises to the cytoplasm. Its subcellular location is the nucleoid. Its function is as follows. Binds to DNA and alters its conformation. May be involved in regulation of gene expression, nucleoid organization and DNA protection. This is Nucleoid-associated protein Rmet_2128 from Cupriavidus metallidurans (strain ATCC 43123 / DSM 2839 / NBRC 102507 / CH34) (Ralstonia metallidurans).